A 406-amino-acid polypeptide reads, in one-letter code: Leucine aminopeptidase 1 (406 aa).

An N-terminal signal peptide occupies residues 1-18; the sequence is MKVTNASLLALLLPAVSG. A propeptide spanning residues 19–94 is cleaved from the precursor; sequence RFVETGEPDR…LRAMTASRKK (76 aa). Asn-186 carries N-linked (GlcNAc...) asparagine glycosylation. 4 residues coordinate Zn(2+): His-194, Asp-213, Glu-252, and Asp-279. Asn-306 carries an N-linked (GlcNAc...) asparagine glycan. The cysteines at positions 328 and 332 are disulfide-linked. Position 361 (His-361) interacts with Zn(2+).

Belongs to the peptidase M28 family. M28E subfamily. In terms of assembly, monomer. Zn(2+) is required as a cofactor.

It is found in the secreted. Functionally, extracellular aminopeptidase that allows assimilation of proteinaceous substrates. The protein is Leucine aminopeptidase 1 (LAP1) of Chaetomium globosum (strain ATCC 6205 / CBS 148.51 / DSM 1962 / NBRC 6347 / NRRL 1970) (Soil fungus).